We begin with the raw amino-acid sequence, 96 residues long: 5-hydroxytryptamine receptor 2B (96 aa).

Residues Cys-1–Met-8 are Extracellular-facing. The N-linked (GlcNAc...) asparagine glycan is linked to Asn-2. The helical transmembrane segment at Leu-9–Leu-30 threads the bilayer. The short motif at Asn-24–Tyr-28 is the NPxxY motif; important for ligand-induced conformation changes and signaling element. Residues Phe-31–Leu-96 lie on the Cytoplasmic side of the membrane. Cys-45 is lipidated: S-palmitoyl cysteine.

The protein belongs to the G-protein coupled receptor 1 family. In terms of assembly, interacts (via C-terminus) with MPDZ.

Its subcellular location is the cell membrane. It is found in the synapse. The protein resides in the synaptosome. In terms of biological role, G-protein coupled receptor for 5-hydroxytryptamine (serotonin). Also functions as a receptor for various ergot alkaloid derivatives and psychoactive substances. Ligand binding causes a conformation change that triggers signaling via guanine nucleotide-binding proteins (G proteins) and modulates the activity of downstream effectors. HTR2B is coupled to G(q)/G(11) G alpha proteins and activates phospholipase C-beta, releasing diacylglycerol (DAG) and inositol 1,4,5-trisphosphate (IP3) second messengers that modulate the activity of phosphatidylinositol 3-kinase and promote the release of Ca(2+) ions from intracellular stores, respectively. Beta-arrestin family members inhibit signaling via G proteins and mediate activation of alternative signaling pathways. Plays a role in the regulation of dopamine and 5-hydroxytryptamine release, 5-hydroxytryptamine uptake and in the regulation of extracellular dopamine and 5-hydroxytryptamine levels, and thereby affects neural activity. May play a role in the perception of pain. Plays a role in the regulation of behavior, including impulsive behavior. Required for normal proliferation of embryonic cardiac myocytes and normal heart development. Protects cardiomyocytes against apoptosis. Plays a role in the adaptation of pulmonary arteries to chronic hypoxia. Plays a role in vasoconstriction. Required for normal osteoblast function and proliferation, and for maintaining normal bone density. Required for normal proliferation of the interstitial cells of Cajal in the intestine. The sequence is that of 5-hydroxytryptamine receptor 2B (HTR2B) from Cavia porcellus (Guinea pig).